The primary structure comprises 354 residues: DNA polymerase IV (354 aa).

The UmuC domain maps to 7–188; that stretch reads IIHVDMDCFF…LPLAKIPGVG (182 aa). Positions 11 and 106 each coordinate Mg(2+). Residue glutamate 107 is part of the active site.

This sequence belongs to the DNA polymerase type-Y family. In terms of assembly, monomer. Mg(2+) is required as a cofactor.

It localises to the cytoplasm. The catalysed reaction is DNA(n) + a 2'-deoxyribonucleoside 5'-triphosphate = DNA(n+1) + diphosphate. Its function is as follows. Poorly processive, error-prone DNA polymerase involved in untargeted mutagenesis. Copies undamaged DNA at stalled replication forks, which arise in vivo from mismatched or misaligned primer ends. These misaligned primers can be extended by PolIV. Exhibits no 3'-5' exonuclease (proofreading) activity. May be involved in translesional synthesis, in conjunction with the beta clamp from PolIII. This is DNA polymerase IV from Shigella boydii serotype 18 (strain CDC 3083-94 / BS512).